A 370-amino-acid polypeptide reads, in one-letter code: MPPRIIILGAGIIGLSTAVELQQRHQHRSAEPRPSITIVSAELPSQPSEWTEDPRCRPSPDYASMWAGAHYRPIPGATPQLQREAQWAMDTFRRMRRIARDAPEAGVRMMPGIEYLEDSPKEYGRLRTGDRYAGEHDEFRVLDKAELPEGVAWGCRYQTYSLNAPHYSRWLLDRFLAGGGQIVHRKLERLEEAFTLFEDGSQPLVINCTGRNFDQDDKMRIIRGQTVLVRNQFDRTITRQNRDGSWIFLIPRPFAGTIIGGTKEPGDMEVKPRMETRLKLLENCVRAFPEFVDRLEDFDVVLDNVGRRPWRDGGLRLEEERIEDGKTVIHAYGAGGRGYELSWGIAKEVADLVLATERSKFECRVSENLK.

The signal sequence occupies residues 1-18 (MPPRIIILGAGIIGLSTA). 5 residues coordinate FAD: Ile-13, Glu-42, Ala-63, Ser-64, and Gly-68. Residue Asn-207 is glycosylated (N-linked (GlcNAc...) asparagine). Residues Arg-308, Gly-338, and Tyr-339 each contribute to the FAD site.

This sequence belongs to the DAMOX/DASOX family. As to quaternary structure, monomer. Requires FAD as cofactor.

The enzyme catalyses D-aspartate + O2 + H2O = oxaloacetate + H2O2 + NH4(+). The catalysed reaction is D-glutamate + O2 + H2O = H2O2 + 2-oxoglutarate + NH4(+). In terms of biological role, selectively catalyzes the oxidative deamination of acidic amino acids. Protects the organism from the toxicity of D-amino acids. Enables the organism to utilize D-amino acids as a source of nutrients. The chain is D-aspartate oxidase from Talaromyces thermophilus.